A 407-amino-acid polypeptide reads, in one-letter code: Phosphopentomutase (407 aa).

Mn(2+) contacts are provided by Asp10, Asp306, His311, Asp347, His348, and His359.

The protein belongs to the phosphopentomutase family. The cofactor is Mn(2+).

The protein localises to the cytoplasm. It catalyses the reaction 2-deoxy-alpha-D-ribose 1-phosphate = 2-deoxy-D-ribose 5-phosphate. The enzyme catalyses alpha-D-ribose 1-phosphate = D-ribose 5-phosphate. The protein operates within carbohydrate degradation; 2-deoxy-D-ribose 1-phosphate degradation; D-glyceraldehyde 3-phosphate and acetaldehyde from 2-deoxy-alpha-D-ribose 1-phosphate: step 1/2. Isomerase that catalyzes the conversion of deoxy-ribose 1-phosphate (dRib-1-P) and ribose 1-phosphate (Rib-1-P) to deoxy-ribose 5-phosphate (dRib-5-P) and ribose 5-phosphate (Rib-5-P), respectively. The sequence is that of Phosphopentomutase from Photorhabdus laumondii subsp. laumondii (strain DSM 15139 / CIP 105565 / TT01) (Photorhabdus luminescens subsp. laumondii).